The following is a 211-amino-acid chain: MTKTVALLDYGSGNLRSAQRALERAGAEVIVSSDPEVCTNADGLLVPGVGAFDACMKGLKNVFGHRIIGQRLAGGRPVMGICVGMQILFDEGDEHGIKSAGCGEWPGKVERLQAEILPHMGWNTLEMPTNSPMFEGISPDERFYFVHSYGVRKWTLETDDLTTPPEVVWAKHENDRFVAAVENGTLWATQFHPEKSGDAGAQLLRNWINYI.

The Glutamine amidotransferase type-1 domain maps to 4–211; the sequence is TVALLDYGSG…QLLRNWINYI (208 aa). Catalysis depends on Cys82, which acts as the Nucleophile. Residues His192 and Glu194 contribute to the active site.

As to quaternary structure, heterodimer of HisH and HisF.

It localises to the cytoplasm. It catalyses the reaction 5-[(5-phospho-1-deoxy-D-ribulos-1-ylimino)methylamino]-1-(5-phospho-beta-D-ribosyl)imidazole-4-carboxamide + L-glutamine = D-erythro-1-(imidazol-4-yl)glycerol 3-phosphate + 5-amino-1-(5-phospho-beta-D-ribosyl)imidazole-4-carboxamide + L-glutamate + H(+). It carries out the reaction L-glutamine + H2O = L-glutamate + NH4(+). The protein operates within amino-acid biosynthesis; L-histidine biosynthesis; L-histidine from 5-phospho-alpha-D-ribose 1-diphosphate: step 5/9. In terms of biological role, IGPS catalyzes the conversion of PRFAR and glutamine to IGP, AICAR and glutamate. The HisH subunit catalyzes the hydrolysis of glutamine to glutamate and ammonia as part of the synthesis of IGP and AICAR. The resulting ammonia molecule is channeled to the active site of HisF. The sequence is that of Imidazole glycerol phosphate synthase subunit HisH (hisH) from Corynebacterium glutamicum (strain ATCC 13032 / DSM 20300 / JCM 1318 / BCRC 11384 / CCUG 27702 / LMG 3730 / NBRC 12168 / NCIMB 10025 / NRRL B-2784 / 534).